The chain runs to 310 residues: Aspartate carbamoyltransferase catalytic subunit (310 aa).

The carbamoyl phosphate site is built by Arg58 and Thr59. Position 86 (Lys86) interacts with L-aspartate. Residues Arg108, His136, and Gln139 each contribute to the carbamoyl phosphate site. The L-aspartate site is built by Arg169 and Arg224. The carbamoyl phosphate site is built by Gly265 and Pro266.

It belongs to the aspartate/ornithine carbamoyltransferase superfamily. ATCase family. Heterododecamer (2C3:3R2) of six catalytic PyrB chains organized as two trimers (C3), and six regulatory PyrI chains organized as three dimers (R2).

The enzyme catalyses carbamoyl phosphate + L-aspartate = N-carbamoyl-L-aspartate + phosphate + H(+). Its pathway is pyrimidine metabolism; UMP biosynthesis via de novo pathway; (S)-dihydroorotate from bicarbonate: step 2/3. Its function is as follows. Catalyzes the condensation of carbamoyl phosphate and aspartate to form carbamoyl aspartate and inorganic phosphate, the committed step in the de novo pyrimidine nucleotide biosynthesis pathway. The protein is Aspartate carbamoyltransferase catalytic subunit of Citrifermentans bemidjiense (strain ATCC BAA-1014 / DSM 16622 / JCM 12645 / Bem) (Geobacter bemidjiensis).